Reading from the N-terminus, the 494-residue chain is UPF0371 protein Sez_1293 (494 aa).

This sequence belongs to the UPF0371 family.

This Streptococcus equi subsp. zooepidemicus (strain MGCS10565) protein is UPF0371 protein Sez_1293.